Here is a 489-residue protein sequence, read N- to C-terminus: N-succinylglutamate 5-semialdehyde dehydrogenase (489 aa).

221-226 contacts NAD(+); the sequence is GSSGTG. Residues Glu244 and Cys278 contribute to the active site.

The protein belongs to the aldehyde dehydrogenase family. AstD subfamily.

The enzyme catalyses N-succinyl-L-glutamate 5-semialdehyde + NAD(+) + H2O = N-succinyl-L-glutamate + NADH + 2 H(+). It functions in the pathway amino-acid degradation; L-arginine degradation via AST pathway; L-glutamate and succinate from L-arginine: step 4/5. In terms of biological role, catalyzes the NAD-dependent reduction of succinylglutamate semialdehyde into succinylglutamate. In Sorangium cellulosum (strain So ce56) (Polyangium cellulosum (strain So ce56)), this protein is N-succinylglutamate 5-semialdehyde dehydrogenase.